We begin with the raw amino-acid sequence, 261 residues long: Undecaprenyl-diphosphatase (261 aa).

8 helical membrane passes run 1-21, 40-60, 79-99, 106-126, 140-160, 185-205, 210-230, and 239-259; these read MTVL…FLPI, GLTF…AYFW, GRLF…GVLF, IFRS…GLWW, VNLF…IPGV, FLMS…ELPL, LAFI…IKFL, and YLLF…VFWL.

This sequence belongs to the UppP family.

The protein localises to the cell membrane. It carries out the reaction di-trans,octa-cis-undecaprenyl diphosphate + H2O = di-trans,octa-cis-undecaprenyl phosphate + phosphate + H(+). Functionally, catalyzes the dephosphorylation of undecaprenyl diphosphate (UPP). Confers resistance to bacitracin. The sequence is that of Undecaprenyl-diphosphatase from Moorella thermoacetica (strain ATCC 39073 / JCM 9320).